A 149-amino-acid chain; its full sequence is UPF0179 protein Hlac_2319 (149 aa).

The protein belongs to the UPF0179 family.

In Halorubrum lacusprofundi (strain ATCC 49239 / DSM 5036 / JCM 8891 / ACAM 34), this protein is UPF0179 protein Hlac_2319.